The primary structure comprises 512 residues: Centrosomal protein CCDC61 (512 aa).

An N-acetylmethionine modification is found at M1. Residues 1 to 142 (MEQPAGLQVD…PLPLPYQGKP (142 aa)) form a head domain region. 2 coiled-coil regions span residues 176–203 (WHLR…REEA) and 246–273 (RRLA…NCEL). T282 is modified (phosphothreonine). Disordered stretches follow at residues 282–415 (TLPA…SFRS) and 430–472 (SQSV…HLAS). The segment covering 287–300 (AREDRALSSRERST) has biased composition (basic and acidic residues). 4 positions are modified to phosphoserine: S328, S330, S372, and S375. Over residues 406-415 (RSSSVDSFRS) the composition is skewed to low complexity. 2 positions are modified to phosphoserine: S447 and S473.

This sequence belongs to the CCDC61 family. Forms homodimers (via head domain). Interacts with CEP170. Interacts with PCM1 and CEP131. Binds tubulin.

The protein resides in the cytoplasm. It localises to the cytoskeleton. The protein localises to the microtubule organizing center. It is found in the centrosome. Its subcellular location is the centriolar satellite. The protein resides in the cilium basal body. In terms of biological role, microtubule-binding centrosomal protein required for centriole cohesion, independently of the centrosome-associated protein/CEP250 and rootletin/CROCC linker. In interphase, required for anchoring microtubule at the mother centriole subdistal appendages and for centrosome positioning. During mitosis, may be involved in spindle assembly and chromatin alignment by regulating the organization of spindle microtubules into a symmetrical structure. Plays a non-essential role in ciliogenesis. The chain is Centrosomal protein CCDC61 from Rattus norvegicus (Rat).